Consider the following 376-residue polypeptide: Thymidine kinase (376 aa).

Residues 1–39 are disordered; sequence MASYPCHQHASAFDQAARSRGHSNRRTALRPRRQQEATE. Basic residues predominate over residues 19 to 32; that stretch reads SRGHSNRRTALRPR. 56-63 lines the ATP pocket; sequence GPHGMGKT. Glutamate 83 (proton acceptor) is an active-site residue. Residues tyrosine 101 and glutamine 125 each coordinate substrate. Arginine 216 is an ATP binding site. A substrate-binding site is contributed by arginine 222. Positions 260–280 are disordered; that stretch reads GQLSGTAVPPQGAEPQSNAGP.

The protein belongs to the herpesviridae thymidine kinase family. In terms of assembly, homodimer.

It carries out the reaction thymidine + ATP = dTMP + ADP + H(+). Its function is as follows. Catalyzes the transfer of the gamma-phospho group of ATP to thymidine to generate dTMP in the salvage pathway of pyrimidine synthesis. The dTMP serves as a substrate for DNA polymerase during viral DNA replication. Allows the virus to be reactivated and to grow in non-proliferative cells lacking a high concentration of phosphorylated nucleic acid precursors. The polypeptide is Thymidine kinase (Human herpesvirus 1 (strain KOS) (HHV-1)).